Reading from the N-terminus, the 299-residue chain is GTPase Era (299 aa).

Residues 4–171 (KSGFVAILGR…VDILSENLDE (168 aa)) form the Era-type G domain. The tract at residues 12 to 19 (GRPNVGKS) is G1. 12-19 (GRPNVGKS) lines the GTP pocket. Positions 38-42 (XTTRN) are G2. Positions 59 to 62 (DTPG) are G3. GTP contacts are provided by residues 59-63 (DTPGI) and 121-124 (NKID). The interval 121 to 124 (NKID) is G4. The segment at 150-152 (ISA) is G5. One can recognise a KH type-2 domain in the interval 202 to 280 (TREEIPHSVA…FLETWVKVKK (79 aa)).

Belongs to the TRAFAC class TrmE-Era-EngA-EngB-Septin-like GTPase superfamily. Era GTPase family. As to quaternary structure, monomer.

Its subcellular location is the cytoplasm. The protein localises to the cell membrane. Functionally, an essential GTPase that binds both GDP and GTP, with rapid nucleotide exchange. Plays a role in 16S rRNA processing and 30S ribosomal subunit biogenesis and possibly also in cell cycle regulation and energy metabolism. This is GTPase Era from Streptococcus pneumoniae serotype 19F (strain G54).